Here is a 255-residue protein sequence, read N- to C-terminus: Acetylglutamate kinase (255 aa).

Substrate-binding positions include 40–41 (GG), Arg62, and Asn153.

It belongs to the acetylglutamate kinase family. ArgB subfamily.

It localises to the cytoplasm. It catalyses the reaction N-acetyl-L-glutamate + ATP = N-acetyl-L-glutamyl 5-phosphate + ADP. It participates in amino-acid biosynthesis; L-arginine biosynthesis; N(2)-acetyl-L-ornithine from L-glutamate: step 2/4. Catalyzes the ATP-dependent phosphorylation of N-acetyl-L-glutamate. This chain is Acetylglutamate kinase, found in Bacillus cereus (strain AH820).